Here is a 278-residue protein sequence, read N- to C-terminus: S-formylglutathione hydrolase YeiG (278 aa).

Catalysis depends on charge relay system residues S145, D223, and H256.

The protein belongs to the esterase D family.

The catalysed reaction is S-formylglutathione + H2O = formate + glutathione + H(+). In terms of biological role, serine hydrolase involved in the detoxification of formaldehyde. Hydrolyzes S-formylglutathione to glutathione and formate. The protein is S-formylglutathione hydrolase YeiG (yeiG) of Escherichia coli O6:K15:H31 (strain 536 / UPEC).